A 502-amino-acid polypeptide reads, in one-letter code: ATP synthase subunit alpha (502 aa).

Positions 115–135 are disordered; it reads VDGLGPINTTNTRPIESPAPG. 169-176 lines the ATP pocket; the sequence is GDRQTGKT.

This sequence belongs to the ATPase alpha/beta chains family. F-type ATPases have 2 components, CF(1) - the catalytic core - and CF(0) - the membrane proton channel. CF(1) has five subunits: alpha(3), beta(3), gamma(1), delta(1), epsilon(1). CF(0) has three main subunits: a(1), b(2) and c(9-12). The alpha and beta chains form an alternating ring which encloses part of the gamma chain. CF(1) is attached to CF(0) by a central stalk formed by the gamma and epsilon chains, while a peripheral stalk is formed by the delta and b chains.

Its subcellular location is the cell membrane. The catalysed reaction is ATP + H2O + 4 H(+)(in) = ADP + phosphate + 5 H(+)(out). In terms of biological role, produces ATP from ADP in the presence of a proton gradient across the membrane. The alpha chain is a regulatory subunit. In Bacillus cereus (strain B4264), this protein is ATP synthase subunit alpha.